Here is a 482-residue protein sequence, read N- to C-terminus: UDP-N-acetylmuramate--L-alanine ligase (482 aa).

123–129 is a binding site for ATP; the sequence is GTHGKTT.

This sequence belongs to the MurCDEF family.

It localises to the cytoplasm. The catalysed reaction is UDP-N-acetyl-alpha-D-muramate + L-alanine + ATP = UDP-N-acetyl-alpha-D-muramoyl-L-alanine + ADP + phosphate + H(+). Its pathway is cell wall biogenesis; peptidoglycan biosynthesis. Functionally, cell wall formation. The sequence is that of UDP-N-acetylmuramate--L-alanine ligase from Pseudomonas putida (strain GB-1).